The chain runs to 243 residues: Lectin-4 (243 aa).

Pyrrolidone carboxylic acid is present on Gln1. A glycan (N-linked (GlcNAc...) asparagine; in alpha chain) is linked at Asn5. Asn18 carries an N-linked (GlcNAc...) asparagine glycan. 2 residues coordinate Mn(2+): Glu129 and Asp131. Residues Asp131, Trp133, Asn135, and Asp140 each contribute to the Ca(2+) site. Asp140 and His145 together coordinate Mn(2+).

This sequence belongs to the leguminous lectin family. As to quaternary structure, homodimer of Alpha and Beta forms. N-glycosylation of Asn-5 converts form Beta to form Alpha.

Lectin which has a strong affinity for both the Lewis b and y human blood-group determinants. The chain is Lectin-4 from Griffonia simplicifolia (Bandeiraea simplicifolia).